Here is a 252-residue protein sequence, read N- to C-terminus: 5-oxoprolinase subunit A (252 aa).

The protein belongs to the LamB/PxpA family. Forms a complex composed of PxpA, PxpB and PxpC.

The catalysed reaction is 5-oxo-L-proline + ATP + 2 H2O = L-glutamate + ADP + phosphate + H(+). In terms of biological role, catalyzes the cleavage of 5-oxoproline to form L-glutamate coupled to the hydrolysis of ATP to ADP and inorganic phosphate. This chain is 5-oxoprolinase subunit A, found in Mycolicibacterium paratuberculosis (strain ATCC BAA-968 / K-10) (Mycobacterium paratuberculosis).